The following is a 587-amino-acid chain: Aspartate--tRNA ligase (587 aa).

Glutamate 175 contacts L-aspartate. An aspartate region spans residues 199–202 (QQFK). Arginine 221 and histidine 446 together coordinate L-aspartate. 221-223 (RDE) is a binding site for ATP. Position 480 (glutamate 480) interacts with ATP. Arginine 487 provides a ligand contact to L-aspartate. 532–535 (GVDR) contributes to the ATP binding site.

This sequence belongs to the class-II aminoacyl-tRNA synthetase family. Type 1 subfamily. As to quaternary structure, homodimer.

Its subcellular location is the cytoplasm. It catalyses the reaction tRNA(Asp) + L-aspartate + ATP = L-aspartyl-tRNA(Asp) + AMP + diphosphate. Its function is as follows. Catalyzes the attachment of L-aspartate to tRNA(Asp) in a two-step reaction: L-aspartate is first activated by ATP to form Asp-AMP and then transferred to the acceptor end of tRNA(Asp). In Streptomyces coelicolor (strain ATCC BAA-471 / A3(2) / M145), this protein is Aspartate--tRNA ligase.